Consider the following 78-residue polypeptide: Beta-defensin 105A (78 aa).

An N-terminal signal peptide occupies residues 1–27; the sequence is MALIRKTFYFLFAVFFVLVQLPSECQA. Disulfide bonds link Cys-43-Cys-74, Cys-53-Cys-67, and Cys-57-Cys-73.

It belongs to the beta-defensin family.

It is found in the secreted. Functionally, has antimicrobial activity. The protein is Beta-defensin 105A (DEFB105A) of Pongo pygmaeus (Bornean orangutan).